A 378-amino-acid polypeptide reads, in one-letter code: MKVPFLQLLCLNAALASANVVQGAAQGFAAGVTGGGDITPSYPKTNEELVSLLESDEPQVVVLTKTFDFIGTEGTTTEDGCAPWGTGKSCQLAINSNGWCGKNPVVTITYDNAAKNGIHIKSNKTLVGEGDKGVLSGKGLYFEGGVSNIIVQNIKITNLNPGFVWGGDAFTFFGADLIWIDHCETSLTGRQHYVTGFHPNTRMTWSNNFLNGVTTHSAGCDDHHYWTMELVGPGDEITFQNNYVYHTTGRGPALSGTTLFHAVNSVWSSIPGHAIEGGDKGRGLFEGCFFEDVVEIAPAKPENQLFSASEANAASCKSALGRACQANGYSKSGAFGSSETGFFKDFAGLTIAPAGSATDALAYVPKNCGIGRLESCDA.

Positions 1 to 18 are cleaved as a signal peptide; that stretch reads MKVPFLQLLCLNAALASA. Disulfide bonds link Cys-81–Cys-100 and Cys-90–Cys-220. The N-linked (GlcNAc...) asparagine glycan is linked to Asn-123. The active site involves Arg-250. A disulfide bridge links Cys-316 with Cys-324.

The protein belongs to the polysaccharide lyase 1 family.

The protein resides in the secreted. The enzyme catalyses Eliminative cleavage of (1-&gt;4)-alpha-D-galacturonan methyl ester to give oligosaccharides with 4-deoxy-6-O-methyl-alpha-D-galact-4-enuronosyl groups at their non-reducing ends.. Its function is as follows. Pectinolytic enzymes consist of four classes of enzymes: pectin lyase, polygalacturonase, pectin methylesterase and rhamnogalacturonase. Among pectinolytic enzymes, pectin lyase is the most important in depolymerization of pectin, since it cleaves internal glycosidic bonds of highly methylated pectins. In Aspergillus niger, this protein is Probable pectin lyase C (pelC).